The following is a 137-amino-acid chain: Basic phospholipase A2 DsM-S1 (137 aa).

Positions 1-16 are cleaved as a signal peptide; sequence MRTLWIVAVCLIGVEG. 7 disulfides stabilise this stretch: cysteine 42–cysteine 131, cysteine 44–cysteine 60, cysteine 59–cysteine 111, cysteine 65–cysteine 137, cysteine 66–cysteine 104, cysteine 73–cysteine 97, and cysteine 91–cysteine 102. Ca(2+)-binding residues include tyrosine 43, glycine 45, and glycine 47. Residue histidine 63 is part of the active site. Residue aspartate 64 participates in Ca(2+) binding. Residue aspartate 105 is part of the active site.

It belongs to the phospholipase A2 family. Group II subfamily. D49 sub-subfamily. The cofactor is Ca(2+). In terms of tissue distribution, expressed by the venom gland.

The protein resides in the secreted. The enzyme catalyses a 1,2-diacyl-sn-glycero-3-phosphocholine + H2O = a 1-acyl-sn-glycero-3-phosphocholine + a fatty acid + H(+). In terms of biological role, snake venom phospholipase A2 (PLA2) that is neurotoxic. PLA2 catalyzes the calcium-dependent hydrolysis of the 2-acyl groups in 3-sn-phosphoglycerides. The polypeptide is Basic phospholipase A2 DsM-S1 (Daboia siamensis (Eastern Russel's viper)).